The chain runs to 71 residues: uncharacterized protein (71 aa).

The protein resides in the mitochondrion matrix. Its subcellular location is the kinetoplast. This is an uncharacterized protein from Trypanosoma brucei brucei.